The chain runs to 455 residues: MIKAIDTIVAQATAPGRGGVGIIRISGPDVEAVAKVILGKVPKLRFAEYLSFSDQHNEVLDQGIALFFKAPNSFTGEDVLELQGHGGPVVMDMLIKAILSIKNLRGANPGEFSERAFMNDKLDLAQAEGIADLIEATSEQAAKSALHSLQGEFSEKIEQLVESLIYLRIYVEASIDFPEEEVDFLSDGKISKGLYQIIDNLEAVKKQAKQGAILRDGMKVVIAGRPNAGKSSLLNSLVGVERAIVTDIAGTTRDVMREHIHIDGMPLHIIDTAGLREGADEIEKIGIERAWQEITTADRILFMLDATTTSAEDPRQIWPDFIDKLPKSVGLTVVRNKADLTGEAFSMTENHDHPVYRISAKTGQGVDLLKEHLKDIMGYQGHTTSGFMARRRHLEAIDNAQRHLLEGKVQLEEYKAGELLAEELRLTQQYLSEITGAFSSDDLLGKIFSSFCIGK.

Arg24, Glu81, and Lys121 together coordinate (6S)-5-formyl-5,6,7,8-tetrahydrofolate. Residues 217–378 (GMKVVIAGRP…LKEHLKDIMG (162 aa)) form the TrmE-type G domain. Position 227 (Asn227) interacts with K(+). GTP is bound by residues 227–232 (NAGKSS), 246–252 (TDIAGTT), 271–274 (DTAG), and 336–339 (NKAD). Residue Ser231 coordinates Mg(2+). Residues Thr246, Ile248, and Thr251 each contribute to the K(+) site. Residue Thr252 coordinates Mg(2+). Position 455 (Lys455) interacts with (6S)-5-formyl-5,6,7,8-tetrahydrofolate.

It belongs to the TRAFAC class TrmE-Era-EngA-EngB-Septin-like GTPase superfamily. TrmE GTPase family. As to quaternary structure, homodimer. Heterotetramer of two MnmE and two MnmG subunits. The cofactor is K(+).

The protein localises to the cytoplasm. In terms of biological role, exhibits a very high intrinsic GTPase hydrolysis rate. Involved in the addition of a carboxymethylaminomethyl (cmnm) group at the wobble position (U34) of certain tRNAs, forming tRNA-cmnm(5)s(2)U34. This chain is tRNA modification GTPase MnmE, found in Psychromonas ingrahamii (strain DSM 17664 / CCUG 51855 / 37).